We begin with the raw amino-acid sequence, 162 residues long: NADH-quinone oxidoreductase subunit C (162 aa).

It belongs to the complex I 30 kDa subunit family. In terms of assembly, NDH-1 is composed of 14 different subunits. Subunits NuoB, C, D, E, F, and G constitute the peripheral sector of the complex.

It is found in the cell inner membrane. It carries out the reaction a quinone + NADH + 5 H(+)(in) = a quinol + NAD(+) + 4 H(+)(out). In terms of biological role, NDH-1 shuttles electrons from NADH, via FMN and iron-sulfur (Fe-S) centers, to quinones in the respiratory chain. The immediate electron acceptor for the enzyme in this species is believed to be ubiquinone. Couples the redox reaction to proton translocation (for every two electrons transferred, four hydrogen ions are translocated across the cytoplasmic membrane), and thus conserves the redox energy in a proton gradient. This chain is NADH-quinone oxidoreductase subunit C, found in Geobacter sulfurreducens (strain ATCC 51573 / DSM 12127 / PCA).